The primary structure comprises 203 residues: Outer-membrane lipoprotein LolB (203 aa).

An N-terminal signal peptide occupies residues 1 to 16 (MKTFLPCLFFLLILVG). Cys-17 is lipidated: N-palmitoyl cysteine. Residue Cys-17 is the site of S-diacylglycerol cysteine attachment.

The protein belongs to the LolB family. Monomer.

Its subcellular location is the cell outer membrane. In terms of biological role, plays a critical role in the incorporation of lipoproteins in the outer membrane after they are released by the LolA protein. This chain is Outer-membrane lipoprotein LolB, found in Psychromonas ingrahamii (strain DSM 17664 / CCUG 51855 / 37).